Consider the following 806-residue polypeptide: Lysine-specific demethylase JMJ15 (806 aa).

The interval 1–43 (MEPFSAAQNKEDKDTSVEPPRRRCHRKNKGTNVEPPSSPYHPK) is disordered. The span at 9–21 (NKEDKDTSVEPPR) shows a compositional bias: basic and acidic residues. In terms of domain architecture, JmjN spans 61–102 (APVFHPTSEEFEDTLAYIEKIRPLAESFGICRIVPPSNWSPP). The segment at 128–176 (NRGPVKKKTPKGRKRKRGKYSRTVAPKKRNGSVSKSVSTPKATEEENFG) is disordered. The segment covering 131-157 (PVKKKTPKGRKRKRGKYSRTVAPKKRN) has biased composition (basic residues). Positions 132 to 139 (VKKKTPKG) match the Nuclear localization signal motif. The span at 158 to 168 (GSVSKSVSTPK) shows a compositional bias: polar residues. The JmjC domain maps to 261–427 (KYISSGWNLN…HGQNAVEIYS (167 aa)). Fe cation-binding residues include histidine 307, glutamate 309, and histidine 395. Residues cysteine 514, cysteine 517, cysteine 528, cysteine 531, cysteine 539, histidine 542, cysteine 545, and cysteine 547 each coordinate Zn(2+). Residues 514-566 (CISCFSDLHLSATGCKNCSSLEEYGCTKHDICSCEGKDRFIFLRYTIDELSSL) form a C5HC2 zinc finger. The region spanning 629-687 (IMDLAAYHVEPINLGFLVVGKLWCNKHAIFPKGFKSRVKFYNVQDPMRISYYVSEIVDA) is the FYR N-terminal domain. One can recognise an FYR C-terminal domain in the interval 689–775 (LLGPLFKVTL…HGQVEYWNHK (87 aa)).

Belongs to the JARID1 histone demethylase family. Fe(2+) is required as a cofactor. Expressed in roots, cotyledons, shoot apex, rosette and cauline leaves, stems, inflorescences and siliques. Expressed at low levels during vegetative growth but to higher levels in young floral organs.

It is found in the nucleus. It carries out the reaction N(6),N(6),N(6)-trimethyl-L-lysyl(4)-[histone H3] + 2-oxoglutarate + O2 = N(6),N(6)-dimethyl-L-lysyl(4)-[histone H3] + formaldehyde + succinate + CO2. In terms of biological role, histone demethylase that demethylates 'Lys-4' (H3K4me) of histone H3 with a specific activity for H3K4me3. No activity on H3K4me2, H3K4me1, H3K9me3/2, H3K27me3/2 and H3K36me3/2. Involved in the control of flowering time by demethylating H3K4me3 at the FLC locus and repressing its expression. The repression of FLC level and reduction in H3K4me3 at the FLC locus results in induction of the flowering activator FT, which is a downstream target of FLC. Promotes salt tolerance by down-regulating the expression of several transcriptions factors involved in stress responses via H3K4me3 and H3K4me2 demethylation. In Arabidopsis thaliana (Mouse-ear cress), this protein is Lysine-specific demethylase JMJ15.